The chain runs to 157 residues: Transmembrane protein 42 (157 aa).

The next 4 helical transmembrane spans lie at phenylalanine 37 to alanine 57, isoleucine 67 to phenylalanine 87, isoleucine 100 to leucine 120, and cysteine 124 to histidine 144.

It localises to the membrane. The chain is Transmembrane protein 42 (Tmem42) from Mus musculus (Mouse).